The chain runs to 131 residues: Small ribosomal subunit protein uS8 (131 aa).

The protein belongs to the universal ribosomal protein uS8 family. Part of the 30S ribosomal subunit. Contacts proteins S5 and S12.

Its function is as follows. One of the primary rRNA binding proteins, it binds directly to 16S rRNA central domain where it helps coordinate assembly of the platform of the 30S subunit. The chain is Small ribosomal subunit protein uS8 from Sorangium cellulosum (strain So ce56) (Polyangium cellulosum (strain So ce56)).